The sequence spans 432 residues: Adenosylhomocysteinase (432 aa).

S2 is modified (N-acetylserine). Residues T57, D131, and E156 each coordinate substrate. S183 bears the Phosphoserine mark. The tract at residues 183-350 is NAD binding; the sequence is SVTKSKFDNL…EGRLVNLGCA (168 aa). Substrate-binding residues include K186 and D190. The residue at position 186 (K186) is an N6-(2-hydroxyisobutyryl)lysine. The residue at position 193 (Y193) is a Phosphotyrosine.

The protein belongs to the adenosylhomocysteinase family. As to quaternary structure, homotetramer. Interaction with AHCYL1. NAD(+) is required as a cofactor.

The protein resides in the cytoplasm. The protein localises to the melanosome. It localises to the nucleus. Its subcellular location is the endoplasmic reticulum. It carries out the reaction S-adenosyl-L-homocysteine + H2O = L-homocysteine + adenosine. It participates in amino-acid biosynthesis; L-homocysteine biosynthesis; L-homocysteine from S-adenosyl-L-homocysteine: step 1/1. Its function is as follows. Catalyzes the hydrolysis of S-adenosyl-L-homocysteine to form adenosine and homocysteine. Binds copper ions. This Bos taurus (Bovine) protein is Adenosylhomocysteinase (AHCY).